The following is a 400-amino-acid chain: Enoyl-[acyl-carrier-protein] reductase [NADH] 2 (400 aa).

Residues 48–53, 75–76, 112–113, and 141–142 each bind NAD(+); these read GASSGF, FE, DA, and LA. Tyr228 serves as a coordination point for substrate. Catalysis depends on Tyr238, which acts as the Proton donor. NAD(+) contacts are provided by residues Lys247 and 276–278; that span reads LVT.

The protein belongs to the TER reductase family. Monomer.

It catalyses the reaction a 2,3-saturated acyl-[ACP] + NAD(+) = a (2E)-enoyl-[ACP] + NADH + H(+). The protein operates within lipid metabolism; fatty acid biosynthesis. Involved in the final reduction of the elongation cycle of fatty acid synthesis (FAS II). Catalyzes the reduction of a carbon-carbon double bond in an enoyl moiety that is covalently linked to an acyl carrier protein (ACP). The sequence is that of Enoyl-[acyl-carrier-protein] reductase [NADH] 2 from Vibrio vulnificus (strain CMCP6).